We begin with the raw amino-acid sequence, 394 residues long: Lipase 3 (394 aa).

Residues 1–20 (MTRGALKVTILLVGLGLVLA) form the signal peptide. Residue Asn-131 is glycosylated (N-linked (GlcNAc...) asparagine). Active-site charge relay system residues include Ser-164 and His-369.

The protein belongs to the AB hydrolase superfamily. Lipase family. Fat body.

This is Lipase 3 (Lip3) from Drosophila melanogaster (Fruit fly).